Here is a 236-residue protein sequence, read N- to C-terminus: 2-C-methyl-D-erythritol 4-phosphate cytidylyltransferase (236 aa).

Belongs to the IspD/TarI cytidylyltransferase family. IspD subfamily. As to quaternary structure, homodimer.

It catalyses the reaction 2-C-methyl-D-erythritol 4-phosphate + CTP + H(+) = 4-CDP-2-C-methyl-D-erythritol + diphosphate. It participates in isoprenoid biosynthesis; isopentenyl diphosphate biosynthesis via DXP pathway; isopentenyl diphosphate from 1-deoxy-D-xylulose 5-phosphate: step 2/6. In terms of biological role, catalyzes the formation of 4-diphosphocytidyl-2-C-methyl-D-erythritol from CTP and 2-C-methyl-D-erythritol 4-phosphate (MEP). This Escherichia coli O45:K1 (strain S88 / ExPEC) protein is 2-C-methyl-D-erythritol 4-phosphate cytidylyltransferase.